A 159-amino-acid chain; its full sequence is Endoribonuclease YbeY (159 aa).

Residues histidine 120, histidine 124, and histidine 130 each contribute to the Zn(2+) site.

This sequence belongs to the endoribonuclease YbeY family. Zn(2+) is required as a cofactor.

It localises to the cytoplasm. In terms of biological role, single strand-specific metallo-endoribonuclease involved in late-stage 70S ribosome quality control and in maturation of the 3' terminus of the 16S rRNA. In Parafrankia sp. (strain EAN1pec), this protein is Endoribonuclease YbeY.